The chain runs to 1754 residues: Collagen alpha-1(XVIII) chain (1754 aa).

Residues 1 to 23 (MAPYPCGCHILLLLFCCLAAARA) form the signal peptide. A disordered region spans residues 42–104 (ATTIPEPQGP…TSAESPDAPE (63 aa)). A compositionally biased stretch (polar residues) spans 57–73 (TADTTTHVTPRNGSTEP). N-linked (GlcNAc...) asparagine glycosylation is found at Asn-68, Asn-129, and Asn-164. The interval 152 to 256 (LALAGPSSTP…APSQQLQRPD (105 aa)) is disordered. Positions 157-169 (PSSTPQENGTTLW) are enriched in polar residues. The segment covering 215–253 (SGRASLSSLLGGAPPWGSLQDPDSQGLSPAAAAPSQQLQ) has biased composition (low complexity). In terms of domain architecture, FZ spans 329-446 (APAGRCLPLP…TQEDGYCVLI (118 aa)). 5 cysteine pairs are disulfide-bonded: Cys-334–Cys-397, Cys-344–Cys-390, Cys-381–Cys-419, Cys-408–Cys-443, and Cys-412–Cys-432. Residues 456–644 (EVGLLQLLGD…IAELKVRRDP (189 aa)) enclose the Laminin G-like domain. The tract at residues 645–751 (QVSPMHCLDE…RTPGGRVKEG (107 aa)) is nonhelical region 1 (NC1). The interval 645 to 1443 (QVSPMHCLDE…GPPGTMGASS (799 aa)) is disordered. Over residues 672–681 (DARELLREET) the composition is skewed to basic and acidic residues. Position 696 is a phosphothreonine (Thr-696). The segment covering 717 to 738 (QTTVASLGAQTLPGSDSVSTWD) has biased composition (polar residues). The triple-helical region 1 (COL1) stretch occupies residues 752–785 (GLKGQKGEPGVPGPPGRAGPPGSPCLPGPPGLPC). Over residues 762–789 (VPGPPGRAGPPGSPCLPGPPGLPCPVSP) the composition is skewed to pro residues. The nonhelical region 2 (NC2) stretch occupies residues 786 to 795 (PVSPLGPAGP). The segment at 796 to 875 (ALQTVPGPQG…QGPPGPPGPS (80 aa)) is triple-helical region 2 (COL2). Residues 815–831 (TPGRDGEPGDPGEDGKP) show a composition bias toward basic and acidic residues. Residues 833–846 (DTGPQGFPGTPGDV) are compositionally biased toward low complexity. Pro residues predominate over residues 862–874 (PPGPQGPPGPPGP). The nonhelical region 3 (NC3) stretch occupies residues 876–899 (FRHDKLTFIDMEGSGFGGDLEALR). An O-linked (Xyl...) (chondroitin sulfate) serine glycan is attached at Ser-889. A triple-helical region 3 (COL3) region spans residues 900–1021 (GPRGFPGPPG…PGPPGPPGPG (122 aa)). The segment covering 904-914 (FPGPPGPPGVP) has biased composition (pro residues). N-linked (GlcNAc...) asparagine glycosylation occurs at Asn-926. Low complexity predominate over residues 930-942 (VPGPAGLPGVPGR). Residues 946-961 (PGFPGLPGPPGPPGRE) show a composition bias toward pro residues. Residues 976–1003 (AGAPGHKGSKGAPGPAGARGESGLAGAP) show a composition bias toward low complexity. The span at 1005–1021 (PAGPPGPPGPPGPPGPG) shows a compositional bias: pro residues. The tract at residues 1022–1044 (LPAGFDDMEGSGGPFWSTARSAD) is nonhelical region 4 (NC4). The tract at residues 1045–1127 (GPQGPPGLPG…PGPPGPPGPV (83 aa)) is triple-helical region 4 (COL4). The segment covering 1053–1065 (PGLKGDPGVPGLP) has biased composition (low complexity). Over residues 1095–1109 (KGDRGSRGEKGDPGK) the composition is skewed to basic and acidic residues. The segment covering 1117–1126 (LPGPPGPPGP) has biased composition (pro residues). Positions 1128–1141 (VYVSEQDGSVLSVP) are nonhelical region 5 (NC5). The segment covering 1141–1153 (PGPEGRPGFAGFP) has biased composition (low complexity). The tract at residues 1142-1183 (GPEGRPGFAGFPGPAGPKGNLGSKGERGSPGPKGEKGEPGSI) is triple-helical region 5 (COL5). The interval 1184–1196 (FSPDGGALGPAQK) is nonhelical region 6 (NC6). The tract at residues 1197-1269 (GAKGEPGFRG…PGPPGPPGTP (73 aa)) is triple-helical region 6 (COL6). Residues 1254–1268 (PGPPGPPGPPGPPGT) are compositionally biased toward pro residues. The nonhelical region 7 (NC7) stretch occupies residues 1270–1279 (VYDSNVFAES). A triple-helical region 7 (COL7) region spans residues 1280–1312 (SRPGPPGLPGNQGPPGPKGAKGEVGPPGPPGQF). A compositionally biased stretch (pro residues) spans 1282–1296 (PGPPGLPGNQGPPGP). Residues 1313–1324 (PFDFLQLEAEMK) are nonhelical region 8 (NC8). Over residues 1321–1341 (AEMKGEKGDRGDAGQKGERGE) the composition is skewed to basic and acidic residues. The interval 1325 to 1346 (GEKGDRGDAGQKGERGEPGGGG) is triple-helical region 8 (COL8). Residues 1330-1332 (RGD) carry the Cell attachment site motif. A nonhelical region 9 (NC9) region spans residues 1347 to 1353 (FFGSSLP). Composition is skewed to pro residues over residues 1353–1365 (PGPP…PGPR), 1401–1414 (PPGP…PSFP), and 1424–1436 (PGPP…PGPP). Positions 1354-1411 (GPPGPPGPPGPRGYPGIPGPKGESIRGQPGPPGPQGPPGIGYEGRQGPPGPPGPPGPP) are triple-helical region 9 (COL9). The tract at residues 1412–1424 (SFPGPHRQTISVP) is nonhelical region 10 (NC10). The triple-helical region 10 (COL10) stretch occupies residues 1425-1442 (GPPGPPGPPGPPGTMGAS). Residues 1443-1754 (SGVRLWATRQ…IENSFMTASK (312 aa)) are nonhelical region 11 (NC11). Residues 1456–1501 (GQVHEVPEGWLIFVAEQEELYVRVQNGFRKVQLEARTPLPRGTDNE) form a non-collagenous domain 1 association domain region. Residues 1502–1571 (VAALQPPVVQ…RPARPTSPPA (70 aa)) are non-collagenous domain 1 hinge region. Residues 1511–1556 (QLHDSNPYPRREHPHPTARPWRADDILASPPRLPEPQPYPGAPHHS) form a disordered region. Residues 1519–1535 (PRREHPHPTARPWRADD) are compositionally biased toward basic and acidic residues. The segment covering 1541 to 1551 (PRLPEPQPYPG) has biased composition (pro residues). The O-linked (GalNAc...) threonine glycan is linked to Thr-1567. Zn(2+)-binding residues include His-1572, His-1574, His-1582, and Asp-1647. Intrachain disulfides connect Cys-1604–Cys-1744 and Cys-1706–Cys-1736.

Belongs to the multiplexin collagen family. As to quaternary structure, forms homotrimers. Recombinant non-collagenous domain 1 has stronger affinity to NID1, HSPG2 and laminin-1:NID1 complex and lower affinity to FBLN1 and FBLN2 than endostatin. In terms of assembly, monomeric. Interacts with KDR/VEGFR2. Interacts with the ITGA5:ITGB1 complex. Interacts with NID1, HSPG2, laminin-1:NID1 complex, FBLN1 and FBLN2. Prolines at the third position of the tripeptide repeating unit (G-X-Y) of the triple-helical regions are hydroxylated. Post-translationally, circulating endostatins are found as sialoglycoprotein and asialoglycoprotein structures. In terms of processing, undergoes proteolytic processing by CTSL/cathepsin-L and elastase-like proteases to generate both non-collagenous domain 1 trimers and endostatin monomers. In tissue extracts (brain, skeletal muscle, heart, kidney, testis and liver) predominantly bands of approximately 38 kDa are detected; recombinant non-collagenous domain 1 shows similar mobility. In vitro, several proteolytic cleavage sites in the non-collagenous domain 1 hinge region generating different endostatin-like peptides are reported. In terms of tissue distribution, detected in placenta (at protein level). Present in multiple organs with highest levels in liver, lung and kidney.

The protein resides in the secreted. It localises to the extracellular space. The protein localises to the extracellular matrix. Its subcellular location is the basement membrane. In terms of biological role, probably plays a major role in determining the retinal structure as well as in the closure of the neural tube. May regulate extracellular matrix-dependent motility and morphogenesis of endothelial and non-endothelial cells; the function requires homotrimerization and implicates MAPK signaling. Functionally, potently inhibits endothelial cell proliferation and angiogenesis. May inhibit angiogenesis by binding to the heparan sulfate proteoglycans involved in growth factor signaling. Inhibits VEGFA-induced endothelial cell proliferation and migration. Seems to inhibit VEGFA-mediated signaling by blocking the interaction of VEGFA to its receptor KDR/VEGFR2. Modulates endothelial cell migration in an integrin-dependent manner implicating integrin ITGA5:ITGB1 and to a lesser extent ITGAV:ITGB3 and ITGAV:ITGB5. May negatively regulate the activity of homotrimeric non-collagenous domain 1. The chain is Collagen alpha-1(XVIII) chain from Homo sapiens (Human).